Reading from the N-terminus, the 283-residue chain is Acetylglutamate kinase (283 aa).

Residues Gly-63 to Gly-64, Arg-85, and Asn-178 contribute to the substrate site.

The protein belongs to the acetylglutamate kinase family. ArgB subfamily.

It is found in the cytoplasm. It catalyses the reaction N-acetyl-L-glutamate + ATP = N-acetyl-L-glutamyl 5-phosphate + ADP. It functions in the pathway amino-acid biosynthesis; L-arginine biosynthesis; N(2)-acetyl-L-ornithine from L-glutamate: step 2/4. Its function is as follows. Catalyzes the ATP-dependent phosphorylation of N-acetyl-L-glutamate. This is Acetylglutamate kinase from Prochlorococcus marinus (strain AS9601).